A 196-amino-acid polypeptide reads, in one-letter code: Small ribosomal subunit protein uS4c (196 aa).

The interval 15-41 is disordered; the sequence is LGALPGLTSKRPRSGSDLKNPLRSGKR. The S4 RNA-binding domain occupies 89 to 150; sequence MRLDNILFRL…KQRSKALIQN (62 aa).

This sequence belongs to the universal ribosomal protein uS4 family. Part of the 30S ribosomal subunit. Contacts protein S5. The interaction surface between S4 and S5 is involved in control of translational fidelity.

It is found in the plastid. The protein localises to the chloroplast. One of the primary rRNA binding proteins, it binds directly to 16S rRNA where it nucleates assembly of the body of the 30S subunit. Functionally, with S5 and S12 plays an important role in translational accuracy. The chain is Small ribosomal subunit protein uS4c (rps4) from Narcissus odorus (Campernelle jonquil).